The following is a 323-amino-acid chain: tRNA dimethylallyltransferase (323 aa).

12 to 19 (GPTAAGKT) contributes to the ATP binding site. 14–19 (TAAGKT) serves as a coordination point for substrate. Interaction with substrate tRNA stretches follow at residues 37 to 40 (DSAL) and 161 to 165 (QRLIR).

This sequence belongs to the IPP transferase family. Monomer. The cofactor is Mg(2+).

The catalysed reaction is adenosine(37) in tRNA + dimethylallyl diphosphate = N(6)-dimethylallyladenosine(37) in tRNA + diphosphate. In terms of biological role, catalyzes the transfer of a dimethylallyl group onto the adenine at position 37 in tRNAs that read codons beginning with uridine, leading to the formation of N6-(dimethylallyl)adenosine (i(6)A). This is tRNA dimethylallyltransferase from Pseudomonas savastanoi pv. phaseolicola (strain 1448A / Race 6) (Pseudomonas syringae pv. phaseolicola (strain 1448A / Race 6)).